The primary structure comprises 309 residues: Ornithine carbamoyltransferase (309 aa).

Carbamoyl phosphate-binding positions include 57 to 60, Gln84, Arg108, and 135 to 138; these read STRT and HPCQ. L-ornithine contacts are provided by residues Asn166, Asp224, and 228-229; that span reads SM. Carbamoyl phosphate is bound by residues 264–265 and Arg292; that span reads CL.

The protein belongs to the aspartate/ornithine carbamoyltransferase superfamily. OTCase family.

It localises to the cytoplasm. It carries out the reaction carbamoyl phosphate + L-ornithine = L-citrulline + phosphate + H(+). Its pathway is amino-acid biosynthesis; L-arginine biosynthesis; L-arginine from L-ornithine and carbamoyl phosphate: step 1/3. Its function is as follows. Reversibly catalyzes the transfer of the carbamoyl group from carbamoyl phosphate (CP) to the N(epsilon) atom of ornithine (ORN) to produce L-citrulline. The sequence is that of Ornithine carbamoyltransferase from Paracidovorax citrulli (strain AAC00-1) (Acidovorax citrulli).